The sequence spans 446 residues: sn-2 acyl-lipid omega-3 desaturase (ferredoxin), chloroplastic (446 aa).

The N-terminal 65 residues, 1 to 65, are a transit peptide targeting the chloroplast; sequence MANLVLSECG…DGFTRNWALN (65 aa). 2 consecutive transmembrane segments (helical) span residues 118–138 and 141–161; these read LSYVVRDVAIVFALAAGAAYL and WIVWPLYWLAQGTMFWALFVL. A Histidine box-1 motif is present at residues 163-167; that stretch reads HDCGH. Positions 199–203 match the Histidine box-2 motif; it reads HRTHH. The next 3 helical transmembrane spans lie at 231 to 250, 279 to 299, and 302 to 322; these read RFFRFTLPLVMLAYPFYLWA, TACWTAMAALLVCLNFTIGPI, and LKLYGIPYWINVMWLDFVTYL. The Histidine box-3 signature appears at 366 to 370; the sequence is HVIHH.

This sequence belongs to the fatty acid desaturase type 1 family. As to expression, most abundant in leaves and seedlings.

Its subcellular location is the plastid. It localises to the chloroplast inner membrane. It carries out the reaction a (7Z,10Z)-hexadecadienoyl-containing glycerolipid + 2 reduced [2Fe-2S]-[ferredoxin] + O2 + 2 H(+) = a (7Z,10Z,13Z)-hexadecatrienoyl-containing glycerolipid + 2 oxidized [2Fe-2S]-[ferredoxin] + 2 H2O. It catalyses the reaction a (9Z,12Z)-octadecadienoyl-containing glycerolipid + 2 reduced [2Fe-2S]-[ferredoxin] + O2 + 2 H(+) = (9Z,12Z,15Z)-octadecatrienoyl-containing glycerolipid + 2 oxidized [2Fe-2S]-[ferredoxin] + 2 H2O. It participates in lipid metabolism; polyunsaturated fatty acid biosynthesis. Its function is as follows. Chloroplast omega-3 fatty acid desaturase introduces the third double bond in the biosynthesis of 16:3 and 18:3 fatty acids, important constituents of plant membranes. It is thought to use ferredoxin as an electron donor and to act on fatty acids esterified to galactolipids, sulfolipids and phosphatidylglycerol. The polypeptide is sn-2 acyl-lipid omega-3 desaturase (ferredoxin), chloroplastic (Arabidopsis thaliana (Mouse-ear cress)).